A 220-amino-acid chain; its full sequence is MTGTIDLAGDPNIGVYARVFEDIAIVYPGAPAEFTAALARELDVEIVSTFIQGSSIIGSLVSGNSQGLVVSGLATDEELAVLSEYRDVFLLKGPMNAAGNIILANDCVAAVHPEMQIDVAEEIGSFLEVPVVRLTLGGIKTVGMAGFATNKGILVHPRANDTEIANLERIVDLPIGLGSVNMGSGLVGTGLLANSKGYVAGSVTTGFELGRIEEVFGFLE.

It belongs to the eIF-6 family.

Its function is as follows. Binds to the 50S ribosomal subunit and prevents its association with the 30S ribosomal subunit to form the 70S initiation complex. The sequence is that of Translation initiation factor 6 from Methanoculleus marisnigri (strain ATCC 35101 / DSM 1498 / JR1).